The sequence spans 1140 residues: Condensin-2 complex subunit G2 (1140 aa).

The HEAT repeat unit spans residues Leu-460–Lys-493.

Component of the condensin-2 complex, which contains the smc2 and smc4 heterodimer, and three non SMC subunits that probably regulate the complex: ncaph2, ncapd3 and ncapg2.

The protein resides in the nucleus. In terms of biological role, regulatory subunit of the condensin-2 complex, a complex which establishes mitotic chromosome architecture and is involved in physical rigidity of the chromatid axis. Plays a role in the embryonic development of the head and kidney structures. This Danio rerio (Zebrafish) protein is Condensin-2 complex subunit G2.